We begin with the raw amino-acid sequence, 156 residues long: Calglandulin (156 aa).

EF-hand domains follow at residues 8 to 43 (EQIT…VGIN), 44 to 79 (PTKR…YHEK), 82 to 117 (NQDE…AGEP), and 118 to 153 (LNEQ…ESFK). Positions 131, 133, 135, 137, and 142 each coordinate Ca(2+).

It belongs to the calmodulin family. Calglandulin subfamily. Expressed by the venom gland.

The protein resides in the cytoplasm. Its function is as follows. May be involved in the cellular control mechanism of the secretion of toxins from the gland into the venom. The chain is Calglandulin from Bothrops insularis (Golden lancehead).